The chain runs to 158 residues: SsrA-binding protein (158 aa).

Positions 133–158 are disordered; sequence KIHDKRETEAKRDWNRQKQRLLKDNA. Basic and acidic residues predominate over residues 136–158; it reads DKRETEAKRDWNRQKQRLLKDNA.

This sequence belongs to the SmpB family.

It localises to the cytoplasm. Functionally, required for rescue of stalled ribosomes mediated by trans-translation. Binds to transfer-messenger RNA (tmRNA), required for stable association of tmRNA with ribosomes. tmRNA and SmpB together mimic tRNA shape, replacing the anticodon stem-loop with SmpB. tmRNA is encoded by the ssrA gene; the 2 termini fold to resemble tRNA(Ala) and it encodes a 'tag peptide', a short internal open reading frame. During trans-translation Ala-aminoacylated tmRNA acts like a tRNA, entering the A-site of stalled ribosomes, displacing the stalled mRNA. The ribosome then switches to translate the ORF on the tmRNA; the nascent peptide is terminated with the 'tag peptide' encoded by the tmRNA and targeted for degradation. The ribosome is freed to recommence translation, which seems to be the essential function of trans-translation. This chain is SsrA-binding protein, found in Ruegeria pomeroyi (strain ATCC 700808 / DSM 15171 / DSS-3) (Silicibacter pomeroyi).